Reading from the N-terminus, the 192-residue chain is MLKFDNLILASSSEQRLSLLEQIGVIPGQVVSPDIDEVVLKKELPKVYSIRIAKEKGTKVRVLYPDKFILSADTVVCCGRRVLPKAETEEQALECIRLISGRRHRVYTTVCLYTPYNKLHCRNVMTIVKFKHLSMQEINSYIMSGQWKGKSGACSIQTSAGKFVLSINGSYSSVIGLPLYETYSILSQYFSI.

Asp73 functions as the Proton acceptor in the catalytic mechanism.

This sequence belongs to the Maf family. Requires a divalent metal cation as cofactor.

The protein localises to the cytoplasm. The catalysed reaction is a ribonucleoside 5'-triphosphate + H2O = a ribonucleoside 5'-phosphate + diphosphate + H(+). The enzyme catalyses a 2'-deoxyribonucleoside 5'-triphosphate + H2O = a 2'-deoxyribonucleoside 5'-phosphate + diphosphate + H(+). Its function is as follows. Nucleoside triphosphate pyrophosphatase. May have a dual role in cell division arrest and in preventing the incorporation of modified nucleotides into cellular nucleic acids. The polypeptide is Nucleoside triphosphate pyrophosphatase (Ehrlichia chaffeensis (strain ATCC CRL-10679 / Arkansas)).